We begin with the raw amino-acid sequence, 188 residues long: dCTP deaminase (188 aa).

DCTP-binding positions include 111–116 (KSTYAR), 135–137 (TLE), Q156, Y170, and Q180. The active-site Proton donor/acceptor is E137.

It belongs to the dCTP deaminase family. Homotrimer.

The catalysed reaction is dCTP + H2O + H(+) = dUTP + NH4(+). It functions in the pathway pyrimidine metabolism; dUMP biosynthesis; dUMP from dCTP (dUTP route): step 1/2. Functionally, catalyzes the deamination of dCTP to dUTP. The sequence is that of dCTP deaminase from Azoarcus sp. (strain BH72).